A 100-amino-acid polypeptide reads, in one-letter code: uncharacterized protein (100 aa).

It to M.jannaschii MJ1155.1.

This is an uncharacterized protein from Archaeoglobus fulgidus (strain ATCC 49558 / DSM 4304 / JCM 9628 / NBRC 100126 / VC-16).